A 519-amino-acid polypeptide reads, in one-letter code: Glycogen synthase (519 aa).

The tract at residues 1–40 (MISAAVEPHVDAFKPDNREPLTPDFATTGKAPGAQRQHNP) is disordered. Residues 8-21 (PHVDAFKPDNREPL) are compositionally biased toward basic and acidic residues. Lys-57 lines the ADP-alpha-D-glucose pocket.

The protein belongs to the glycosyltransferase 1 family. Bacterial/plant glycogen synthase subfamily.

The enzyme catalyses [(1-&gt;4)-alpha-D-glucosyl](n) + ADP-alpha-D-glucose = [(1-&gt;4)-alpha-D-glucosyl](n+1) + ADP + H(+). Its pathway is glycan biosynthesis; glycogen biosynthesis. Functionally, synthesizes alpha-1,4-glucan chains using ADP-glucose. The chain is Glycogen synthase from Pseudomonas putida (strain ATCC 47054 / DSM 6125 / CFBP 8728 / NCIMB 11950 / KT2440).